The primary structure comprises 217 residues: Killer cell lectin-like receptor subfamily B member 1F (217 aa).

Over 1 to 45 (MDTSKVHGNVKPFRCPGYKQASSPSFSPDACRCPHWHHLALKSGC) the chain is Cytoplasmic. The LCK-binding motif motif lies at 31-34 (CRCP). Residues 46–66 (AGLILLLLSLIGLSVLVRFLV) form a helical; Signal-anchor for type II membrane protein membrane-spanning segment. Residues 67 to 217 (QKPPIEKCSV…WICQKTLIHV (151 aa)) are Extracellular-facing. Residue Asn81 is glycosylated (N-linked (GlcNAc...) asparagine). The 111-residue stretch at 101–211 (HWNKCLFVSQ…CSSDNHWICQ (111 aa)) folds into the C-type lectin domain. Cystine bridges form between Cys122–Cys210 and Cys189–Cys202.

Highly expressed in dendritic cells. Detectable in natural killer cells.

The protein localises to the membrane. Its function is as follows. Binds CLEC2I/Clr-g leading to activation of natural killer cells or costimulation of IL-2 production and proliferation of T-cells in response to antigen stimulation. May contribute to the formation of the immunological synapse between T-cells and antigen-presenting dendritic cells. The chain is Killer cell lectin-like receptor subfamily B member 1F (Klrb1f) from Mus musculus (Mouse).